Here is a 100-residue protein sequence, read N- to C-terminus: Urease subunit gamma (100 aa).

The protein belongs to the urease gamma subunit family. Heterotrimer of UreA (gamma), UreB (beta) and UreC (alpha) subunits. Three heterotrimers associate to form the active enzyme.

The protein localises to the cytoplasm. It catalyses the reaction urea + 2 H2O + H(+) = hydrogencarbonate + 2 NH4(+). The protein operates within nitrogen metabolism; urea degradation; CO(2) and NH(3) from urea (urease route): step 1/1. The protein is Urease subunit gamma of Rhizobium etli (strain ATCC 51251 / DSM 11541 / JCM 21823 / NBRC 15573 / CFN 42).